Reading from the N-terminus, the 839-residue chain is LPS-assembly protein LptD (839 aa).

Positions 1 to 21 (MAIGITACVLSLINYQGLAYS) are cleaved as a signal peptide.

This sequence belongs to the LptD family. In terms of assembly, component of the lipopolysaccharide transport and assembly complex. Interacts with LptE and LptA.

The protein localises to the cell outer membrane. In terms of biological role, together with LptE, is involved in the assembly of lipopolysaccharide (LPS) at the surface of the outer membrane. This chain is LPS-assembly protein LptD, found in Legionella pneumophila (strain Paris).